The primary structure comprises 60 residues: Metallothionein (60 aa).

The tract at residues 1–28 (MDPCECSKTGNCTCGGSCTCKNCSCTSC) is beta. A divalent metal cation contacts are provided by C4, C6, C12, C14, C18, C20, C23, C25, C28, C32, C33, C35, C36, C40, C43, C47, C49, C54, C58, and C59. An alpha region spans residues 29–60 (KKSCCSCCPSGCSKCASGCVCKGKTCDTSCCQ).

This sequence belongs to the metallothionein superfamily. Type 1 family.

Metallothioneins have a high content of cysteine residues that bind various heavy metals. The polypeptide is Metallothionein (mt) (Gobiomorphus cotidianus (New Zealand common bully)).